The sequence spans 647 residues: 5-aminolevulinate synthase, non-specific, mitochondrial (647 aa).

Residues 1 to 56 (METVVRRCPFLSRVPQAFLQKAGKSLLFYAQNCPKMMEIGAKPAPRALSTSAVLCQ) constitute a mitochondrion transit peptide. The tract at residues 61 to 112 (TPPANEKDKAAKAEVQQAPDGSQQAPDGSQQTADGTQLPSGHPSLASSQGTG) is disordered. Residues 79–112 (PDGSQQAPDGSQQTADGTQLPSGHPSLASSQGTG) are compositionally biased toward polar residues. 3 residues coordinate substrate: arginine 224, serine 341, and lysine 360. 3 residues coordinate pyridoxal 5'-phosphate: serine 393, histidine 421, and threonine 449. Lysine 452 is a catalytic residue. At lysine 452 the chain carries N6-(pyridoxal phosphate)lysine. Pyridoxal 5'-phosphate-binding residues include threonine 481 and threonine 482. Threonine 569 provides a ligand contact to substrate. Proline 583 is modified (hydroxyproline).

It belongs to the class-II pyridoxal-phosphate-dependent aminotransferase family. As to quaternary structure, homodimer. Interacts (hydroxylated form) with VHL. Pyridoxal 5'-phosphate is required as a cofactor. In normoxia, is hydroxylated at Pro-583, promoting interaction with VHL, initiating ubiquitination and subsequent degradation via the proteasome. Post-translationally, ubiquitinated; in normoxia following hydroxylation and interaction with VHL, leading to its subsequent degradation via the proteasome.

It localises to the mitochondrion inner membrane. The catalysed reaction is succinyl-CoA + glycine + H(+) = 5-aminolevulinate + CO2 + CoA. Its pathway is porphyrin-containing compound metabolism; protoporphyrin-IX biosynthesis; 5-aminolevulinate from glycine: step 1/1. In terms of biological role, catalyzes the pyridoxal 5'-phosphate (PLP)-dependent condensation of succinyl-CoA and glycine to form aminolevulinic acid (ALA), with CoA and CO2 as by-products. The protein is 5-aminolevulinate synthase, non-specific, mitochondrial (ALAS1) of Bos taurus (Bovine).